Consider the following 421-residue polypeptide: MPGRGRCPDCGSAELVEDSHYSQNQLVCSDCGCVVTEGVLTTTFSDEGNLREVTYSRSTGENEQVSRSQQRGLRRVRDLCRVLQLPPTFEDTAVAYYQQAHQLAGIRTARLQKKEVLAGCCVLITCRQRNWPLTMGTICTLLYADLDVFSGTYMQIVKLLGLDVPSLCLVDLVKTYCSSFKLFEASPSVPAKYVEDKEKMLSRTLQLVELADETWLVTGRHPLPVITAATFLAWQSLRPSDRLTCSLARFCKLANVDLPYPASSRLQELLAVLLRMAEQLAWLQVLKLDKRSVVKHIGDLLQHRHMLVRKAFRDGTAEMDAGEKELQGQGQGQGLGDEDVGSSSLELPAGKRPSSPALLLPPCMLKPPKRVCPAPPVSMVTGDEDISDSEIEQYLRTPQEVRDFQKAQAARQAAQGTPNPP.

Residues 2–36 (PGRGRCPDCGSAELVEDSHYSQNQLVCSDCGCVVT) form a TFIIB-type zinc finger. The Zn(2+) site is built by Cys7, Cys10, Cys28, and Cys31. A run of 2 repeats spans residues 72-157 (GLRR…MQIV) and 173-249 (VKTY…SLAR). The tract at residues 108-114 (TARLQKK) is interaction with target DNA. The interval 325 to 357 (ELQGQGQGQGLGDEDVGSSSLELPAGKRPSSPA) is disordered. Ser355 carries the phosphoserine modification. Positions 359–365 (LLPPCML) are required for the formation of a ternary complex with DNA and TBP; not required for interaction with TBP in the absence of DNA. Cysteine sulfenic acid (-SOH) is present on Cys363. The segment at 367–421 (PPKRVCPAPPVSMVTGDEDISDSEIEQYLRTPQEVRDFQKAQAARQAAQGTPNPP) is required for interaction with TBP and formation of a ternary complex with DNA and TBP.

Belongs to the TFIIB family. In terms of assembly, component of TFIIIB complexes. The TFIIIB complex has two activities, alpha and beta. The TFIIIB-alpha activity complex is composed of TBP, BDP1, and a complex containing both BRF2 and at least four stably associated proteins; this complex inhibits the transcription by pol III via its phosphorylation by CK2; YY1 facilitates the TFIIIB-alpha complex formation. Interacts with TBP; this interaction promotes recruitment of BRF2 to TATA box-containing promoters. Interacts with TBP and the BURE sequence (GC-rich sequence downstream from the TATA box) to form a strong ternary complex which is joined by BDP1; this ternary complex stimulates pol III transcription. Forms a trimeric complex composed of TBP, BRF2 and mini-SNAPc complex (SNAP43, SNAP50, and the N-terminal third of SNAP190) on the promoter. Assembly of the TBP-BRF2 complex is stimulated by SNAP190. Interacts with MAF1 and SNAPC4. In terms of processing, in response to oxidative stress, Cys-363 is reversibly oxidized to cysteine sulfenic acid. Oxidation of Cys-363 impairs formation of a ternary complex with TBP and DNA and down-regulates expression of target genes in response to oxidative stress.

The protein localises to the nucleus. In terms of biological role, general activator of RNA polymerase III transcription. Factor exclusively required for RNA polymerase III transcription of genes with promoter elements upstream of the initiation sites. Contributes to the regulation of gene expression; functions as activator in the absence of oxidative stress. Down-regulates expression of target genes in response to oxidative stress. Overexpression protects cells against apoptosis in response to oxidative stress. The polypeptide is Transcription factor IIIB 50 kDa subunit (BRF2) (Bos taurus (Bovine)).